Consider the following 130-residue polypeptide: Small ribosomal subunit protein uS9 (130 aa).

The protein belongs to the universal ribosomal protein uS9 family.

This is Small ribosomal subunit protein uS9 from Aliivibrio fischeri (strain MJ11) (Vibrio fischeri).